The following is a 421-amino-acid chain: MDKLIITGGPRLDGEIRISGAKNAALPILAATLLADGPVTVGNLPHLHDITTMIELFGRMGIEPVIDEKLAVEIDPRTIKTLVAPYELVKTMRASILVLGPMVARFGEAEVALPGGCAIGSRPVDLHIRGLEAMGAKIEVEGGYIKAKAPEGGLRGAHFFFDTVSVTGTENIMMAAALAKGRSVLQNAAREPEVVDLANFINAMGGKVQGAGTDTITIDGVERLASATYRVMPDRIETGTYLVAAAVTGGRVKVKDTDPTILEAVLEKLKEAGADITTGEDWIELDMHGKRPKAVNLRTAPYPAFPTDMQAQFISLNAIAEGTGAVIETIFENRFMHVYEMHRMGAQIQVEGNTAIVTGVKALKGAPVMATDLRASASLVLSALVAEGDTLIDRIYHIDRGYECIEEKLQMLGAKIRRVPG.

22-23 (KN) is a binding site for phosphoenolpyruvate. R93 contacts UDP-N-acetyl-alpha-D-glucosamine. The active-site Proton donor is the C117. Residue C117 is modified to 2-(S-cysteinyl)pyruvic acid O-phosphothioketal. UDP-N-acetyl-alpha-D-glucosamine is bound by residues 122–126 (RPVDL), D308, and I330.

The protein belongs to the EPSP synthase family. MurA subfamily.

It is found in the cytoplasm. The enzyme catalyses phosphoenolpyruvate + UDP-N-acetyl-alpha-D-glucosamine = UDP-N-acetyl-3-O-(1-carboxyvinyl)-alpha-D-glucosamine + phosphate. The protein operates within cell wall biogenesis; peptidoglycan biosynthesis. In terms of biological role, cell wall formation. Adds enolpyruvyl to UDP-N-acetylglucosamine. In Pseudomonas entomophila (strain L48), this protein is UDP-N-acetylglucosamine 1-carboxyvinyltransferase.